A 373-amino-acid chain; its full sequence is Aromatic amino acid aminotransferase (373 aa).

Lys-212 bears the N6-(pyridoxal phosphate)lysine mark.

The protein belongs to the class-II pyridoxal-phosphate-dependent aminotransferase family. In terms of assembly, homodimer. Requires pyridoxal 5'-phosphate as cofactor.

It carries out the reaction an aromatic L-alpha-amino acid + 2-oxoglutarate = an aromatic oxo-acid + L-glutamate. Aminotransferase that catalyzes the conversion of aromatic amino acids and 2-oxoglutarate into corresponding aromatic oxo acids and L-glutamate. The polypeptide is Aromatic amino acid aminotransferase (Corynebacterium jeikeium (strain K411)).